A 490-amino-acid chain; its full sequence is Histone-lysine N-methyltransferase SMYD1 (490 aa).

Residues 7–253 form the SET domain; the sequence is ENVEVFTAEG…EGEELTVSYI (247 aa). 17–19 is a binding site for S-adenosyl-L-methionine; it reads KGR. Zn(2+) contacts are provided by Cys52, Cys55, Cys65, Cys68, Cys74, Cys78, His86, and Cys90. An MYND-type zinc finger spans residues 52 to 90; it reads CHTCFKRQEKLHRCGQCKFAHYCDRTCQKDAWLNHKNEC. S-adenosyl-L-methionine is bound by residues His135 and 205 to 206; that span reads NH. Cys208 provides a ligand contact to Zn(2+). 270 to 272 is a binding site for S-adenosyl-L-methionine; the sequence is YYF. Zn(2+)-binding residues include Cys274, Cys276, and Cys279.

It belongs to the class V-like SAM-binding methyltransferase superfamily. In terms of assembly, interacts with HDAC1, HDAC2 and HDAC3. Interacts (via MYND-type zinc finger) with NACA isoform skNAC. As to expression, expression seems mostly restricted to heart and skeletal muscle.

It is found in the cytoplasm. Its subcellular location is the nucleus. It catalyses the reaction L-lysyl(4)-[histone H3] + 3 S-adenosyl-L-methionine = N(6),N(6),N(6)-trimethyl-L-lysyl(4)-[histone H3] + 3 S-adenosyl-L-homocysteine + 3 H(+). Its function is as follows. Methylates histone H3 at 'Lys-4' (H3K4me), seems able to perform both mono-, di-, and trimethylation. Acts as a transcriptional repressor. Essential for cardiomyocyte differentiation and cardiac morphogenesis. The protein is Histone-lysine N-methyltransferase SMYD1 (SMYD1) of Homo sapiens (Human).